The primary structure comprises 94 residues: Citrate lyase acyl carrier protein (94 aa).

At S14 the chain carries O-(phosphoribosyl dephospho-coenzyme A)serine.

Belongs to the CitD family. As to quaternary structure, oligomer with a subunit composition of (alpha,beta,gamma)6.

It is found in the cytoplasm. Functionally, covalent carrier of the coenzyme of citrate lyase. This is Citrate lyase acyl carrier protein from Halothermothrix orenii (strain H 168 / OCM 544 / DSM 9562).